Here is a 516-residue protein sequence, read N- to C-terminus: Acetylcholine receptor subunit alpha-like (516 aa).

An N-terminal signal peptide occupies residues 1–21 (MRSVTKYYLHGVVLFATGCAG). Over 22 to 243 (NPDAKRLYDD…ITMRRKTLFY (222 aa)) the chain is Extracellular. Residues N45 and N132 are each glycosylated (N-linked (GlcNAc...) asparagine). Disulfide bonds link C149-C163 and C222-C223. Residue N233 is glycosylated (N-linked (GlcNAc...) asparagine). Transmembrane regions (helical) follow at residues 244–264 (TVNL…VFYL), 274–294 (LSIS…EIIP), and 306–326 (FVLF…VVLN). Residues 327–465 (VHFRSPQTHT…WKYVAMVLDR (139 aa)) lie on the Cytoplasmic side of the membrane. Residues 466-486 (PFLWIFTLAVVVGSAGIILQA) traverse the membrane as a helical segment.

This sequence belongs to the ligand-gated ion channel (TC 1.A.9) family. Acetylcholine receptor (TC 1.A.9.1) subfamily.

It is found in the postsynaptic cell membrane. Its subcellular location is the cell membrane. In terms of biological role, after binding acetylcholine, the AChR responds by an extensive change in conformation that affects all subunits and leads to opening of an ion-conducting channel across the plasma membrane. This chain is Acetylcholine receptor subunit alpha-like (ARA1), found in Manduca sexta (Tobacco hawkmoth).